The primary structure comprises 167 residues: MATLDVLRFPDERLRKIATPIEKITSDLEHIIEDMFETMYLEEGIGLAATQVNIHKRLVVVDTSENRDQPMVFINPELIEKRGETGIEEGCLSVPECRAFVPRAEWIKVRALDRHGEPFEIEADGLLAICLQHEMDHLVGKLFVDYLSPLKRQRIRQKLEKLARNER.

Positions 91 and 133 each coordinate Fe cation. E134 is an active-site residue. H137 contacts Fe cation.

This sequence belongs to the polypeptide deformylase family. The cofactor is Fe(2+).

The catalysed reaction is N-terminal N-formyl-L-methionyl-[peptide] + H2O = N-terminal L-methionyl-[peptide] + formate. Its function is as follows. Removes the formyl group from the N-terminal Met of newly synthesized proteins. Requires at least a dipeptide for an efficient rate of reaction. N-terminal L-methionine is a prerequisite for activity but the enzyme has broad specificity at other positions. The polypeptide is Peptide deformylase (Tolumonas auensis (strain DSM 9187 / NBRC 110442 / TA 4)).